The sequence spans 972 residues: Isoleucine--tRNA ligase (972 aa).

Positions 63-73 (PYANGNIHIGH) match the 'HIGH' region motif. Glu-603 is an L-isoleucyl-5'-AMP binding site. The 'KMSKS' region motif lies at 644–648 (KMSKS). Lys-647 serves as a coordination point for ATP.

Belongs to the class-I aminoacyl-tRNA synthetase family. IleS type 1 subfamily. Monomer.

The protein localises to the cytoplasm. The enzyme catalyses tRNA(Ile) + L-isoleucine + ATP = L-isoleucyl-tRNA(Ile) + AMP + diphosphate. In terms of biological role, catalyzes the attachment of isoleucine to tRNA(Ile). As IleRS can inadvertently accommodate and process structurally similar amino acids such as valine, to avoid such errors it has two additional distinct tRNA(Ile)-dependent editing activities. One activity is designated as 'pretransfer' editing and involves the hydrolysis of activated Val-AMP. The other activity is designated 'posttransfer' editing and involves deacylation of mischarged Val-tRNA(Ile). The polypeptide is Isoleucine--tRNA ligase (Brucella suis biovar 1 (strain 1330)).